A 161-amino-acid chain; its full sequence is Phosphopantetheine adenylyltransferase (161 aa).

Thr10 contributes to the substrate binding site. ATP is bound by residues 10–11 (TF) and His18. Lys42, Leu75, and Arg89 together coordinate substrate. Residues 90-92 (GLR), Glu100, and 125-131 (YSFLSSS) contribute to the ATP site.

It belongs to the bacterial CoaD family. Homohexamer. The cofactor is Mg(2+).

The protein localises to the cytoplasm. The enzyme catalyses (R)-4'-phosphopantetheine + ATP + H(+) = 3'-dephospho-CoA + diphosphate. Its pathway is cofactor biosynthesis; coenzyme A biosynthesis; CoA from (R)-pantothenate: step 4/5. In terms of biological role, reversibly transfers an adenylyl group from ATP to 4'-phosphopantetheine, yielding dephospho-CoA (dPCoA) and pyrophosphate. This Thermodesulfovibrio yellowstonii (strain ATCC 51303 / DSM 11347 / YP87) protein is Phosphopantetheine adenylyltransferase.